The following is a 321-amino-acid chain: Cytochrome c biogenesis protein CcsA (321 aa).

Helical transmembrane passes span 17 to 37 (IISI…IVGL), 43 to 63 (KGMI…WIYS), 71 to 91 (LYES…VPKI), 143 to 163 (MLLS…LLVI), 225 to 245 (VISL…VWAN), 258 to 273 (ETWA…IYLH), and 286 to 306 (AIVA…VNLL).

Belongs to the CcmF/CycK/Ccl1/NrfE/CcsA family. May interact with Ccs1.

It is found in the plastid. It localises to the chloroplast thylakoid membrane. Functionally, required during biogenesis of c-type cytochromes (cytochrome c6 and cytochrome f) at the step of heme attachment. The protein is Cytochrome c biogenesis protein CcsA of Liriodendron tulipifera (Tuliptree).